The chain runs to 195 residues: Protein LIGHT-DEPENDENT SHORT HYPOCOTYLS 4 (195 aa).

The span at 28 to 38 (TTTSSSSSSSS) shows a compositional bias: low complexity. 2 disordered regions span residues 28-51 (TTTSSSSSSSSGGSGTNQLSRYEN) and 162-195 (SQAKARGISYEKKKRKRPPPPLPPAQPAISSSPN). Positions 48 to 175 (RYENQKRRDW…ARGISYEKKK (128 aa)) constitute an ALOG domain. The Nuclear localization signal motif lies at 173-177 (KKKRK).

Belongs to the plant homeotic and developmental regulators ALOG protein family. In terms of tissue distribution, induced by NAC054/CUC1 and NAC098/CUC2 in shoot organ boundary cells.

It is found in the nucleus. Its function is as follows. Probable transcription regulator that acts as a developmental regulator by promoting cell growth in response to light. May suppress organ differentiation in the boundary region. This Arabidopsis thaliana (Mouse-ear cress) protein is Protein LIGHT-DEPENDENT SHORT HYPOCOTYLS 4 (LSH4).